Consider the following 540-residue polypeptide: DNA topoisomerase 1 (540 aa).

Residues 1–110 (MELFIVESPT…NIKRAVFYEI (110 aa)) enclose the Toprim domain. Mg(2+) contacts are provided by E7 and D79. Positions 126–536 (NMNLVYAQFA…FMEKIFGKEL (411 aa)) constitute a Topo IA-type catalytic domain. Positions 161–166 (SAGRVQ) are interaction with DNA. Y281 acts as the O-(5'-phospho-DNA)-tyrosine intermediate in catalysis.

The protein belongs to the type IA topoisomerase family. Monomer. Requires Mg(2+) as cofactor.

It carries out the reaction ATP-independent breakage of single-stranded DNA, followed by passage and rejoining.. In terms of biological role, releases the supercoiling and torsional tension of DNA, which is introduced during the DNA replication and transcription, by transiently cleaving and rejoining one strand of the DNA duplex. Introduces a single-strand break via transesterification at a target site in duplex DNA. The scissile phosphodiester is attacked by the catalytic tyrosine of the enzyme, resulting in the formation of a DNA-(5'-phosphotyrosyl)-enzyme intermediate and the expulsion of a 3'-OH DNA strand. The free DNA strand then undergoes passage around the unbroken strand, thus removing DNA supercoils. Finally, in the religation step, the DNA 3'-OH attacks the covalent intermediate to expel the active-site tyrosine and restore the DNA phosphodiester backbone. This Aquifex aeolicus (strain VF5) protein is DNA topoisomerase 1.